Consider the following 418-residue polypeptide: ATP-dependent Clp protease ATP-binding subunit ClpX (418 aa).

Residues 1–54 (MTRKDDESDQFFCSFCGKNQKEVKKLIAGPSVYICNECVSLCEEIIEDEDKESL) form the ClpX-type ZB domain. The Zn(2+) site is built by C13, C16, C35, and C38. 120-127 (PTGCGKTL) serves as a coordination point for ATP.

It belongs to the ClpX chaperone family. Component of the ClpX-ClpP complex. Forms a hexameric ring that, in the presence of ATP, binds to fourteen ClpP subunits assembled into a disk-like structure with a central cavity, resembling the structure of eukaryotic proteasomes.

Functionally, ATP-dependent specificity component of the Clp protease. It directs the protease to specific substrates. Can perform chaperone functions in the absence of ClpP. The polypeptide is ATP-dependent Clp protease ATP-binding subunit ClpX (Desulforapulum autotrophicum (strain ATCC 43914 / DSM 3382 / VKM B-1955 / HRM2) (Desulfobacterium autotrophicum)).